The chain runs to 98 residues: Large ribosomal subunit protein uL23 (98 aa).

This sequence belongs to the universal ribosomal protein uL23 family. Part of the 50S ribosomal subunit. Contacts protein L29, and trigger factor when it is bound to the ribosome.

Its function is as follows. One of the early assembly proteins it binds 23S rRNA. One of the proteins that surrounds the polypeptide exit tunnel on the outside of the ribosome. Forms the main docking site for trigger factor binding to the ribosome. In Dinoroseobacter shibae (strain DSM 16493 / NCIMB 14021 / DFL 12), this protein is Large ribosomal subunit protein uL23.